The sequence spans 496 residues: Transactivator/viroplasmin protein (496 aa).

Positions 102–128 (RPNQGIQIPKKNEDHSSSSSKEEKGIQ) are disordered. Basic and acidic residues predominate over residues 111–128 (KKNEDHSSSSSKEEKGIQ).

Belongs to the caulimoviridae viroplasmin family.

The protein localises to the host cytoplasm. Enhances the translation of downstream ORFs on polycistronic mRNAs derived from carnation etched ring virus. The polypeptide is Transactivator/viroplasmin protein (Dianthus caryophyllus (Carnation)).